Reading from the N-terminus, the 150-residue chain is Large ribosomal subunit protein uL15 (150 aa).

Residues 1-15 (MNLSNLQPAEGSTHN) are compositionally biased toward polar residues. The disordered stretch occupies residues 1 to 53 (MNLSNLQPAEGSTHNQNKRVGRGEGSGKGGTAARGHKGAKSRSGYSKKIGFEG). A compositionally biased stretch (gly residues) spans 23–32 (GEGSGKGGTA).

It belongs to the universal ribosomal protein uL15 family. In terms of assembly, part of the 50S ribosomal subunit.

In terms of biological role, binds to the 23S rRNA. The polypeptide is Large ribosomal subunit protein uL15 (Flavobacterium johnsoniae (strain ATCC 17061 / DSM 2064 / JCM 8514 / BCRC 14874 / CCUG 350202 / NBRC 14942 / NCIMB 11054 / UW101) (Cytophaga johnsonae)).